Reading from the N-terminus, the 122-residue chain is Large ribosomal subunit protein bL19 (122 aa).

The protein belongs to the bacterial ribosomal protein bL19 family.

This protein is located at the 30S-50S ribosomal subunit interface and may play a role in the structure and function of the aminoacyl-tRNA binding site. This chain is Large ribosomal subunit protein bL19, found in Acinetobacter baumannii (strain AB307-0294).